We begin with the raw amino-acid sequence, 37 residues long: Large ribosomal subunit protein bL36 (37 aa).

Belongs to the bacterial ribosomal protein bL36 family.

This Alkaliphilus oremlandii (strain OhILAs) (Clostridium oremlandii (strain OhILAs)) protein is Large ribosomal subunit protein bL36.